Consider the following 379-residue polypeptide: Probable tRNA sulfurtransferase (379 aa).

In terms of domain architecture, THUMP spans 52 to 157; sequence DEFLDKLKFI…RHHAFVFCKI (106 aa). ATP is bound by residues 175 to 176, Arg-257, Gly-279, and Gln-288; that span reads LL.

This sequence belongs to the ThiI family.

The protein resides in the cytoplasm. It catalyses the reaction [ThiI sulfur-carrier protein]-S-sulfanyl-L-cysteine + a uridine in tRNA + 2 reduced [2Fe-2S]-[ferredoxin] + ATP + H(+) = [ThiI sulfur-carrier protein]-L-cysteine + a 4-thiouridine in tRNA + 2 oxidized [2Fe-2S]-[ferredoxin] + AMP + diphosphate. The catalysed reaction is [ThiS sulfur-carrier protein]-C-terminal Gly-Gly-AMP + S-sulfanyl-L-cysteinyl-[cysteine desulfurase] + AH2 = [ThiS sulfur-carrier protein]-C-terminal-Gly-aminoethanethioate + L-cysteinyl-[cysteine desulfurase] + A + AMP + 2 H(+). The protein operates within cofactor biosynthesis; thiamine diphosphate biosynthesis. Its function is as follows. Catalyzes the ATP-dependent transfer of a sulfur to tRNA to produce 4-thiouridine in position 8 of tRNAs, which functions as a near-UV photosensor. Also catalyzes the transfer of sulfur to the sulfur carrier protein ThiS, forming ThiS-thiocarboxylate. This is a step in the synthesis of thiazole, in the thiamine biosynthesis pathway. The sulfur is donated as persulfide by IscS. This Mycoplasmopsis pulmonis (strain UAB CTIP) (Mycoplasma pulmonis) protein is Probable tRNA sulfurtransferase.